We begin with the raw amino-acid sequence, 381 residues long: Alcohol dehydrogenase-like 6 (381 aa).

8 residues coordinate Zn(2+): Cys53, Ser55, His72, Cys102, Cys105, Cys108, Cys116, and Cys179. Positions 55 and 72 each coordinate an alcohol. Ser55 provides a ligand contact to NAD(+). Residues 204 to 209, Asp228, Lys233, 297 to 299, Phe324, and Arg374 each bind NAD(+); these read GLGTVG and LGV.

The protein belongs to the zinc-containing alcohol dehydrogenase family. Class-III subfamily. In terms of assembly, homodimer. The cofactor is Zn(2+).

The protein localises to the cytoplasm. It carries out the reaction a primary alcohol + NAD(+) = an aldehyde + NADH + H(+). The enzyme catalyses a secondary alcohol + NAD(+) = a ketone + NADH + H(+). The chain is Alcohol dehydrogenase-like 6 from Arabidopsis thaliana (Mouse-ear cress).